Consider the following 141-residue polypeptide: Large ribosomal subunit protein uL11 (141 aa).

It belongs to the universal ribosomal protein uL11 family. As to quaternary structure, part of the ribosomal stalk of the 50S ribosomal subunit. Interacts with L10 and the large rRNA to form the base of the stalk. L10 forms an elongated spine to which L12 dimers bind in a sequential fashion forming a multimeric L10(L12)X complex. In terms of processing, one or more lysine residues are methylated.

In terms of biological role, forms part of the ribosomal stalk which helps the ribosome interact with GTP-bound translation factors. The sequence is that of Large ribosomal subunit protein uL11 from Chloroflexus aggregans (strain MD-66 / DSM 9485).